Reading from the N-terminus, the 130-residue chain is Small ribosomal subunit protein uS8 (130 aa).

Belongs to the universal ribosomal protein uS8 family. In terms of assembly, part of the 30S ribosomal subunit.

In terms of biological role, one of the primary rRNA binding proteins, it binds directly to 16S rRNA central domain where it helps coordinate assembly of the platform of the 30S subunit. This is Small ribosomal subunit protein uS8 from Thermococcus onnurineus (strain NA1).